We begin with the raw amino-acid sequence, 311 residues long: Methionyl-tRNA formyltransferase (311 aa).

Residue serine 110–proline 113 coordinates (6S)-5,6,7,8-tetrahydrofolate.

This sequence belongs to the Fmt family.

The catalysed reaction is L-methionyl-tRNA(fMet) + (6R)-10-formyltetrahydrofolate = N-formyl-L-methionyl-tRNA(fMet) + (6S)-5,6,7,8-tetrahydrofolate + H(+). Its function is as follows. Attaches a formyl group to the free amino group of methionyl-tRNA(fMet). The formyl group appears to play a dual role in the initiator identity of N-formylmethionyl-tRNA by promoting its recognition by IF2 and preventing the misappropriation of this tRNA by the elongation apparatus. The chain is Methionyl-tRNA formyltransferase from Streptococcus agalactiae serotype Ia (strain ATCC 27591 / A909 / CDC SS700).